A 200-amino-acid chain; its full sequence is Pyridoxal 5'-phosphate synthase subunit PdxT (200 aa).

52-54 (GES) lines the L-glutamine pocket. The active-site Nucleophile is Cys84. L-glutamine-binding positions include Arg116 and 145–146 (IR). Active-site charge relay system residues include His181 and Glu183.

Belongs to the glutaminase PdxT/SNO family. As to quaternary structure, in the presence of PdxS, forms a dodecamer of heterodimers. Only shows activity in the heterodimer.

It catalyses the reaction aldehydo-D-ribose 5-phosphate + D-glyceraldehyde 3-phosphate + L-glutamine = pyridoxal 5'-phosphate + L-glutamate + phosphate + 3 H2O + H(+). The enzyme catalyses L-glutamine + H2O = L-glutamate + NH4(+). It participates in cofactor biosynthesis; pyridoxal 5'-phosphate biosynthesis. In terms of biological role, catalyzes the hydrolysis of glutamine to glutamate and ammonia as part of the biosynthesis of pyridoxal 5'-phosphate. The resulting ammonia molecule is channeled to the active site of PdxS. This Sulfurisphaera tokodaii (strain DSM 16993 / JCM 10545 / NBRC 100140 / 7) (Sulfolobus tokodaii) protein is Pyridoxal 5'-phosphate synthase subunit PdxT.